Here is a 319-residue protein sequence, read N- to C-terminus: Ribonuclease Z (319 aa).

The Zn(2+) site is built by His-62, His-64, Asp-66, His-67, His-145, Asp-216, and His-274. Asp-66 serves as the catalytic Proton acceptor.

The protein belongs to the RNase Z family. Homodimer. Requires Zn(2+) as cofactor.

It carries out the reaction Endonucleolytic cleavage of RNA, removing extra 3' nucleotides from tRNA precursor, generating 3' termini of tRNAs. A 3'-hydroxy group is left at the tRNA terminus and a 5'-phosphoryl group is left at the trailer molecule.. Zinc phosphodiesterase, which displays some tRNA 3'-processing endonuclease activity. Probably involved in tRNA maturation, by removing a 3'-trailer from precursor tRNA. This Synechococcus sp. (strain CC9902) protein is Ribonuclease Z.